The primary structure comprises 948 residues: Translation initiation factor IF-2 (948 aa).

Disordered regions lie at residues 61 to 120 (IQAN…PALI), 162 to 243 (KSRE…TQSA), and 255 to 285 (QEKD…SHKI). Residues 68–78 (KNPEQDNKDDL) show a composition bias toward basic and acidic residues. Over residues 173–189 (SNTNNANSTNNANNVNN) the composition is skewed to low complexity. The segment covering 190–207 (AKKEISEVKKQEQEIKRH) has biased composition (basic and acidic residues). The span at 208 to 219 (ENIKRRTGFRVI) shows a compositional bias: basic residues. A compositionally biased stretch (polar residues) spans 230–243 (ENSVAESKKPTQSA). The tr-type G domain maps to 447-616 (ERPPVVTIMG…LIQADIMELK (170 aa)). Residues 456–463 (GHVDHGKT) are G1. 456 to 463 (GHVDHGKT) serves as a coordination point for GTP. Positions 481–485 (GITQH) are G2. Residues 502–505 (DTPG) are G3. GTP contacts are provided by residues 502-506 (DTPGH) and 556-559 (NKMD). The G4 stretch occupies residues 556–559 (NKMD). The segment at 592 to 594 (SAK) is G5.

Belongs to the TRAFAC class translation factor GTPase superfamily. Classic translation factor GTPase family. IF-2 subfamily.

It is found in the cytoplasm. In terms of biological role, one of the essential components for the initiation of protein synthesis. Protects formylmethionyl-tRNA from spontaneous hydrolysis and promotes its binding to the 30S ribosomal subunits. Also involved in the hydrolysis of GTP during the formation of the 70S ribosomal complex. This is Translation initiation factor IF-2 from Helicobacter pylori (strain Shi470).